A 3326-amino-acid chain; its full sequence is Protein unc-80 homolog (3326 aa).

The span at 152-164 (IENQGSPGQPCRS) shows a compositional bias: polar residues. 4 disordered regions span residues 152–178 (IENQ…RKTF), 243–267 (KRSS…QQGE), 283–317 (PKAT…RASL), and 450–469 (RKED…GKRR). Ser257 is subject to Phosphoserine. Positions 283–308 (PKATISGCHQGNSFDGSLSSQTSQER) are enriched in polar residues. Ser526 is modified (phosphoserine). Disordered stretches follow at residues 536 to 560 (LSAR…SHGE), 697 to 785 (RKKS…DNIP), 967 to 1076 (GKKV…SRRI), 1405 to 1430 (EDSK…KKVP), and 1469 to 1516 (SSKL…LSNA). Composition is skewed to basic and acidic residues over residues 551 to 560 (LPDHSNSHGE) and 699 to 713 (KSEN…KRPS). Low complexity predominate over residues 723–737 (SSSSTSGFGAPSASG). Gly residues predominate over residues 738–770 (AGDGGGEEGGGGDGGGGGGGGDGGGGGGGGGGP). The segment covering 772 to 783 (EKNEKNQEKDDN) has biased composition (basic and acidic residues). Residues 1038–1055 (SQSAASDTSSQSEQDTSE) are compositionally biased toward low complexity. The span at 1418-1429 (IKSDAGAEEKKV) shows a compositional bias: basic and acidic residues. A run of 2 helical transmembrane segments spans residues 2336–2356 (PFVL…DAAN) and 2466–2486 (IAAT…VEVL). The tract at residues 2493-2515 (PQMSRSDQGHKGTTTANHTMSSG) is disordered. The next 2 membrane-spanning stretches (helical) occupy residues 2853–2873 (GLAE…LVCF) and 2899–2919 (LALW…FVLL). Polar residues predominate over residues 3010 to 3032 (NTGTGTVWEQDSEPSQQASQDTL). The interval 3010-3052 (NTGTGTVWEQDSEPSQQASQDTLSRTDEEDEENDSVSMPSVVS) is disordered. Phosphoserine is present on Ser3110. Disordered stretches follow at residues 3122–3222 (LQQP…VLTS), 3236–3271 (PKQS…LSDP), and 3296–3326 (NGTE…ESHV). Over residues 3127-3136 (GRKRGLRQLR) the composition is skewed to basic residues. Residues 3157–3168 (LSTTRRSIQPKT) are compositionally biased toward polar residues. A compositionally biased stretch (polar residues) spans 3298–3309 (TENPLLSSQFTF). A compositionally biased stretch (acidic residues) spans 3315 to 3326 (GDTDSALDESHV).

The protein belongs to the unc-80 family. NALCN complex consists of NALCN and auxiliary subunits, UNC79, UNC80 and NACL1. These auxiliary subunits are essential for the NALCN complex function. Interacts (via N-terminus half) with NALCN; this interaction facilitates NALCN surface localization. Interacts (via C-terminus) with UNC79. UNC80 bridges NALCN to UNC79. Post-translationally, phosphorylated on tyrosine residues. As to expression, expressed almost exclusively in the brain. Expressed in hippocampus and ventral tegmental area neurons.

Its subcellular location is the cell membrane. The protein resides in the cell projection. It localises to the dendrite. Functionally, auxiliary subunit of the NALCN sodium channel complex. The NALCN sodium channel complex is a voltage-gated ion channel responsible for the resting Na(+) permeability that controls neuronal excitability. This complex is activated by neuropeptides substance P, neurotensin. In addition, the channel is inhibited by extracellular Ca(2+) through the Ca(2+)-sensing receptor. UNC80 is essential for NALCN sensitivity to extracellular calcium. The sequence is that of Protein unc-80 homolog (Unc80) from Mus musculus (Mouse).